Here is a 424-residue protein sequence, read N- to C-terminus: Endoglucanase 1 (424 aa).

An N-terminal signal peptide occupies residues 1–18; it reads MAKFSALCSLALLGLATA. Disulfide bonds link Cys35/Cys41, Cys68/Cys90, Cys80/Cys86, Cys156/Cys384, Cys188/Cys211, Cys192/Cys210, Cys231/Cys250, Cys239/Cys244, and Cys255/Cys331. Residue Asn76 is glycosylated (N-linked (GlcNAc...) asparagine). The Nucleophile role is filled by Glu213. The active-site Proton donor is the Glu218. 2 N-linked (GlcNAc...) asparagine glycosylation sites follow: Asn271 and Asn385.

This sequence belongs to the glycosyl hydrolase 7 (cellulase C) family. Monomer.

The protein localises to the secreted. The catalysed reaction is Endohydrolysis of (1-&gt;4)-beta-D-glucosidic linkages in cellulose, lichenin and cereal beta-D-glucans.. Endoglucanase that is involved in the biological conversion of cellulose to glucose. Hydrolyzes internal beta-1,4-glucosidic bonds. This chain is Endoglucanase 1, found in Pyricularia oryzae (strain 70-15 / ATCC MYA-4617 / FGSC 8958) (Rice blast fungus).